The chain runs to 158 residues: Protein SREK1IP1 (158 aa).

Disordered regions lie at residues 1-20 (MAAPGPNKDNIRAGCKRCGY) and 45-158 (SSTS…SDTD). The CCHC-type zinc finger occupies 13-30 (AGCKRCGYPGHLTFECRN). A compositionally biased stretch (basic and acidic residues) spans 59–79 (ALSKEKIFGSHSKGSQEDSRK). Basic residues-rich tracts occupy residues 80–98 (EKHKKKSKERSRGKAKKRS) and 111–140 (KKKKKRKSNKKKGKKEKREKERKHKKKQKK). Low complexity predominate over residues 145 to 158 (SSSSDSSSESSDTD).

In terms of biological role, possible splicing regulator involved in the control of cellular survival. In Danio rerio (Zebrafish), this protein is Protein SREK1IP1 (srek1ip1).